We begin with the raw amino-acid sequence, 319 residues long: GPI-specific phospholipase A2-like PGAP3 (319 aa).

A signal peptide spans 1-23; it reads MAGRTARLVLLAGAAALASGSQG. At 24 to 101 the chain is on the lumenal side; the sequence is DREPVYRDCV…GKWPFSRFLC (78 aa). The N-linked (GlcNAc...) asparagine glycan is linked to N40. A helical transmembrane segment spans residues 102–122; it reads FQEPASAVASFLNGLASLVML. Over 123 to 135 the chain is Cytoplasmic; the sequence is CRYRTSVPASSPM. Residues 136-156 form a helical membrane-spanning segment; it reads YPTCVAFAWVSLNAWFWSTVF. Residues 157–169 are Lumenal-facing; the sequence is HTRDTDLTEKMDY. The chain crosses the membrane as a helical span at residues 170 to 190; the sequence is FCASTVILHSIYLCCVRTVGL. The Cytoplasmic portion of the chain corresponds to 191–200; it reads QHPAMASAFR. Residues 201 to 221 form a helical membrane-spanning segment; sequence ALLLLLLTAHVSYLSLIHFDY. Topologically, residues 222–224 are lumenal; that stretch reads GYN. Residues 225–245 traverse the membrane as a helical segment; sequence MAANVAIGLLNAAWWLAWCLW. Topologically, residues 246–257 are cytoplasmic; the sequence is NQRLPHVHKCVA. The helical transmembrane segment at 258–278 threads the bilayer; that stretch reads VVLLLQGLSLLELLDFPPLFW. The Lumenal segment spans residues 279–281; it reads VLD. A helical transmembrane segment spans residues 282–302; that stretch reads AHAIWHISTIPVHVLFFSFLE. Topologically, residues 303–319 are cytoplasmic; it reads DDSLYLLKESEAKVKLD.

The protein belongs to the PGAP3 family.

The protein resides in the golgi apparatus membrane. Its function is as follows. Involved in the fatty acid remodeling steps of GPI-anchor maturation where the unsaturated acyl chain at sn-2 of inositol phosphate is replaced by a saturated stearoyl chain. May catalyze the first step of the fatty acid remodeling, by removing the unsaturated acyl chain at sn-2 of inositol phosphate, generating a lyso-GPI intermediate. The fatty acid remodeling steps is critical for the integration of GPI-APs into lipid rafts. This is GPI-specific phospholipase A2-like PGAP3 from Bos taurus (Bovine).